The primary structure comprises 372 residues: Tribbles homolog 1 (372 aa).

Disordered stretches follow at residues 1-23 and 52-86; these read MRVG…ALLF and ECSS…GSAP. Positions 59–75 are enriched in pro residues; sequence YLSPPGSPCSPQPPPAA. The Protein kinase domain maps to 91-338; that stretch reads IADYLLLPLA…APEILLHPWF (248 aa). The COP1-binding motif lies at 355–360; sequence DQIVPE.

This sequence belongs to the protein kinase superfamily. CAMK Ser/Thr protein kinase family. Tribbles subfamily. Monomer. Interacts (via protein kinase domain) with CEBPA. Interacts with COP1. As to expression, expressed in most human tissues with the highest levels in skeletal muscle, thyroid gland, pancreas, peripheral blood leukocytes, and bone marrow.

Functionally, adapter protein involved in protein degradation by interacting with COP1 ubiquitin ligase. The COP1-binding motif is masked by autoinhibitory interactions with the protein kinase domain. Serves to alter COP1 substrate specificity by directing the activity of COP1 toward CEBPA. Binds selectively the recognition sequence of CEBPA. Regulates myeloid cell differentiation by altering the expression of CEBPA in a COP1-dependent manner. Controls macrophage, eosinophil and neutrophil differentiation via the COP1-binding domain. Interacts with MAPK kinases and regulates activation of MAP kinases, but has no kinase activity. This Homo sapiens (Human) protein is Tribbles homolog 1.